The primary structure comprises 328 residues: MMWRPSVLLLLLLLRHGAQGKPSPDAGPHGQGRVHQAAPLSDAPHDDAHGNFQYDHEAFLGREVAKEFDQLTPEESQARLGRIVDRMDRAGDGDGWVSLAELRAWIAHTQQRHIRDSVSAAWDTYDTDRDGRVGWEELRNATYGHYAPGEEFHDVEDAETYKKMLARDERRFRVADQDGDSMATREELTAFLHPEEFPHMRDIVIAETLEDLDRNKDGYVQVEEYIADLYSAEPGEEEPAWVQTERQQFRDFRDLNKDGHLDGSEVGHWVLPPAQDQPLVEANHLLHESDTDKDGRLSKAEILGNWNMFVGSQATNYGEDLTRHHDEL.

The N-terminal stretch at 1–20 is a signal peptide; it reads MMWRPSVLLLLLLLRHGAQG. Residues 19–49 are disordered; the sequence is QGKPSPDAGPHGQGRVHQAAPLSDAPHDDAH. EF-hand domains follow at residues 75–112, 113–148, 163–198, 200–235, 241–276, and 277–312; these read ESQA…TQQR, HIRD…HYAP, KMLA…EEFP, MRDI…AEPG, WVQT…PAQD, and QPLV…FVGS. The Ca(2+) site is built by D92, D94, W96, E101, D126, D128, D130, R132, and E137. N140 carries an N-linked (GlcNAc...) asparagine glycan. Ca(2+)-binding residues include D176, D178, D180, M182, E187, D213, N215, D217, Y219, E224, D254, N256, D258, H260, E265, D290, D292, D294, R296, and E301. The Prevents secretion from ER signature appears at 325–328; the sequence is HDEL.

It belongs to the CREC family. In terms of assembly, interacts with PCSK6 (immature form including the propeptide); probably involved in the maturation and the secretion of PCSK6. Degraded by PCSK6 and other endoproteases including FURIN and PCSK5. In terms of processing, N-glycosylated. As to expression, widely expressed.

It is found in the endoplasmic reticulum lumen. Probable molecular chaperone assisting protein biosynthesis and transport in the endoplasmic reticulum. Required for the proper biosynthesis and transport of pulmonary surfactant-associated protein A/SP-A, pulmonary surfactant-associated protein D/SP-D and the lipid transporter ABCA3. By regulating both the proper expression and the degradation through the endoplasmic reticulum-associated protein degradation pathway of these proteins plays a crucial role in pulmonary surfactant homeostasis. Has an anti-fibrotic activity by negatively regulating the secretion of type I and type III collagens. This calcium-binding protein also transiently associates with immature PCSK6 and regulates its secretion. This is Reticulocalbin-3 from Homo sapiens (Human).